The primary structure comprises 450 residues: UDP-N-acetylmuramoylalanine--D-glutamate ligase (450 aa).

116–122 serves as a coordination point for ATP; that stretch reads GSNGKTT.

It belongs to the MurCDEF family.

The protein localises to the cytoplasm. The enzyme catalyses UDP-N-acetyl-alpha-D-muramoyl-L-alanine + D-glutamate + ATP = UDP-N-acetyl-alpha-D-muramoyl-L-alanyl-D-glutamate + ADP + phosphate + H(+). It functions in the pathway cell wall biogenesis; peptidoglycan biosynthesis. In terms of biological role, cell wall formation. Catalyzes the addition of glutamate to the nucleotide precursor UDP-N-acetylmuramoyl-L-alanine (UMA). In Dechloromonas aromatica (strain RCB), this protein is UDP-N-acetylmuramoylalanine--D-glutamate ligase.